The following is a 497-amino-acid chain: UDP-N-acetylmuramoyl-L-alanyl-D-glutamate--2,6-diaminopimelate ligase (497 aa).

Serine 29 is a UDP-N-acetyl-alpha-D-muramoyl-L-alanyl-D-glutamate binding site. 116–122 (GTNGKTT) lines the ATP pocket. Residues asparagine 157, 158 to 159 (TT), serine 185, glutamine 191, and arginine 193 each bind UDP-N-acetyl-alpha-D-muramoyl-L-alanyl-D-glutamate. Position 225 is an N6-carboxylysine (lysine 225). Residues arginine 392, 416–419 (DNPR), glycine 467, and glutamate 471 contribute to the meso-2,6-diaminopimelate site. Positions 416–419 (DNPR) match the Meso-diaminopimelate recognition motif motif.

It belongs to the MurCDEF family. MurE subfamily. Requires Mg(2+) as cofactor. In terms of processing, carboxylation is probably crucial for Mg(2+) binding and, consequently, for the gamma-phosphate positioning of ATP.

It localises to the cytoplasm. The enzyme catalyses UDP-N-acetyl-alpha-D-muramoyl-L-alanyl-D-glutamate + meso-2,6-diaminopimelate + ATP = UDP-N-acetyl-alpha-D-muramoyl-L-alanyl-gamma-D-glutamyl-meso-2,6-diaminopimelate + ADP + phosphate + H(+). Its pathway is cell wall biogenesis; peptidoglycan biosynthesis. Functionally, catalyzes the addition of meso-diaminopimelic acid to the nucleotide precursor UDP-N-acetylmuramoyl-L-alanyl-D-glutamate (UMAG) in the biosynthesis of bacterial cell-wall peptidoglycan. In Buchnera aphidicola subsp. Acyrthosiphon pisum (strain APS) (Acyrthosiphon pisum symbiotic bacterium), this protein is UDP-N-acetylmuramoyl-L-alanyl-D-glutamate--2,6-diaminopimelate ligase.